The chain runs to 191 residues: Potassium-transporting ATPase KdpC subunit (191 aa).

A helical membrane pass occupies residues 7-27 (ASLVLFLSLTLLTGVAYPLLV).

Belongs to the KdpC family. As to quaternary structure, the system is composed of three essential subunits: KdpA, KdpB and KdpC.

The protein resides in the cell inner membrane. In terms of biological role, part of the high-affinity ATP-driven potassium transport (or Kdp) system, which catalyzes the hydrolysis of ATP coupled with the electrogenic transport of potassium into the cytoplasm. This subunit acts as a catalytic chaperone that increases the ATP-binding affinity of the ATP-hydrolyzing subunit KdpB by the formation of a transient KdpB/KdpC/ATP ternary complex. The protein is Potassium-transporting ATPase KdpC subunit of Methylibium petroleiphilum (strain ATCC BAA-1232 / LMG 22953 / PM1).